The following is a 399-amino-acid chain: Serine/threonine transporter SstT (399 aa).

Transmembrane regions (helical) follow at residues 8–28 (LSLV…AFLF), 37–57 (IFGE…VFVL), 77–97 (ILFL…IADL), 134–154 (PVVA…IILG), 178–198 (VIHL…AVTF), 212–232 (LLLV…PIMV), 284–304 (VIIP…ITVL), 312–332 (LGIS…SISA), and 348–370 (VACS…GMVI).

Belongs to the dicarboxylate/amino acid:cation symporter (DAACS) (TC 2.A.23) family.

It is found in the cell inner membrane. It carries out the reaction L-serine(in) + Na(+)(in) = L-serine(out) + Na(+)(out). The enzyme catalyses L-threonine(in) + Na(+)(in) = L-threonine(out) + Na(+)(out). In terms of biological role, involved in the import of serine and threonine into the cell, with the concomitant import of sodium (symport system). The polypeptide is Serine/threonine transporter SstT (Acinetobacter baylyi (strain ATCC 33305 / BD413 / ADP1)).